The chain runs to 219 residues: GTP cyclohydrolase-2 (219 aa).

Residue 51 to 55 (RIHSE) coordinates GTP. The Zn(2+) site is built by Cys56, Cys67, and Cys69. GTP-binding positions include Gln72, 94–96 (EGR), and Thr116. Residue Asp128 is the Proton acceptor of the active site. The Nucleophile role is filled by Arg130. Thr151 and Lys156 together coordinate GTP.

It belongs to the GTP cyclohydrolase II family. Zn(2+) is required as a cofactor.

It carries out the reaction GTP + 4 H2O = 2,5-diamino-6-hydroxy-4-(5-phosphoribosylamino)-pyrimidine + formate + 2 phosphate + 3 H(+). It functions in the pathway cofactor biosynthesis; riboflavin biosynthesis; 5-amino-6-(D-ribitylamino)uracil from GTP: step 1/4. In terms of biological role, catalyzes the conversion of GTP to 2,5-diamino-6-ribosylamino-4(3H)-pyrimidinone 5'-phosphate (DARP), formate and pyrophosphate. This chain is GTP cyclohydrolase-2, found in Pasteurella multocida (strain Pm70).